We begin with the raw amino-acid sequence, 430 residues long: Histidinol dehydrogenase (430 aa).

Substrate is bound by residues S237, Q259, and H262. Residues Q259 and H262 each contribute to the Zn(2+) site. Active-site proton acceptor residues include E327 and H328. Residues H328, D361, E415, and H420 each contribute to the substrate site. Residue D361 coordinates Zn(2+). Residue H420 participates in Zn(2+) binding.

The protein belongs to the histidinol dehydrogenase family. Zn(2+) is required as a cofactor.

The enzyme catalyses L-histidinol + 2 NAD(+) + H2O = L-histidine + 2 NADH + 3 H(+). Its pathway is amino-acid biosynthesis; L-histidine biosynthesis; L-histidine from 5-phospho-alpha-D-ribose 1-diphosphate: step 9/9. Its function is as follows. Catalyzes the sequential NAD-dependent oxidations of L-histidinol to L-histidinaldehyde and then to L-histidine. This Sulfurimonas denitrificans (strain ATCC 33889 / DSM 1251) (Thiomicrospira denitrificans (strain ATCC 33889 / DSM 1251)) protein is Histidinol dehydrogenase.